A 215-amino-acid polypeptide reads, in one-letter code: UPF0502 protein YceH (215 aa).

The residue at position 80 (K80) is an N6-acetyllysine.

The protein belongs to the UPF0502 family.

In Escherichia coli O157:H7, this protein is UPF0502 protein YceH.